Here is a 161-residue protein sequence, read N- to C-terminus: Large ribosomal subunit protein uL15 (161 aa).

The tract at residues 1 to 43 (MKLSDIADNAGARKKRMRVGRGIGSGKGKTSGRGGKGQTARSG) is disordered. Gly residues predominate over residues 21 to 37 (RGIGSGKGKTSGRGGKG).

Belongs to the universal ribosomal protein uL15 family. In terms of assembly, part of the 50S ribosomal subunit.

Functionally, binds to the 23S rRNA. The chain is Large ribosomal subunit protein uL15 from Bradyrhizobium sp. (strain ORS 278).